We begin with the raw amino-acid sequence, 343 residues long: Putative outer membrane protein y4fJ (343 aa).

Residues 1–17 (MRMNFSTVLLGSSVALA) form the signal peptide.

The protein belongs to the alphaproteobacteria porin family.

It localises to the cell outer membrane. May act as an outer membrane pore. This chain is Putative outer membrane protein y4fJ, found in Sinorhizobium fredii (strain NBRC 101917 / NGR234).